Here is a 54-residue protein sequence, read N- to C-terminus: Ovomucoid (54 aa).

In terms of domain architecture, Kazal-like spans 4 to 54 (VDCSDYPKPACSLDYMPLCGSDSKTYSNKCNFCNAVVDSNGTLTLSHFEKC). Cystine bridges form between Cys-6–Cys-36, Cys-14–Cys-33, and Cys-22–Cys-54. Asn-43 carries an N-linked (GlcNAc...) asparagine glycan.

It localises to the secreted. The sequence is that of Ovomucoid from Chroicocephalus ridibundus (Black-headed gull).